The chain runs to 870 residues: LPS-assembly protein LptD (870 aa).

Residues Met-1–Ala-25 form the signal peptide.

Belongs to the LptD family. In terms of assembly, component of the lipopolysaccharide transport and assembly complex. Interacts with LptE and LptA.

It localises to the cell outer membrane. Functionally, together with LptE, is involved in the assembly of lipopolysaccharide (LPS) at the surface of the outer membrane. This chain is LPS-assembly protein LptD, found in Coxiella burnetii (strain RSA 493 / Nine Mile phase I).